The primary structure comprises 447 residues: Putative bacteriocin-SkfA transport system permease protein SkfF (447 aa).

Residues 1–3 (MPF) lie on the Cytoplasmic side of the membrane. The chain crosses the membrane as a helical span at residues 4-22 (LIMLLFVGAIGFQVSFVSR). Residues 23-29 (STTWDMS) are Extracellular-facing. Residues 30-50 (IAGWVLTGVFILYTAFGLFSN) form a helical membrane-spanning segment. At 51–59 (RLPSQMADI) the chain is on the cytoplasmic side. A helical transmembrane segment spans residues 60 to 80 (IWLYGTATSFSKVVYSVLFFS). Residues 81–85 (VTWKA) are Extracellular-facing. The helical transmembrane segment at 86–104 (LLWIISAIFGDVLIVLLSG) threads the bilayer. The Cytoplasmic portion of the chain corresponds to 105–113 (DHINLLGRS). A helical transmembrane segment spans residues 114-134 (IIFVGLFFIAEVWLMSVSCAR). The Extracellular portion of the chain corresponds to 135-141 (TVKKMKR). The chain crosses the membrane as a helical span at residues 142–160 (VYVLVFLLMLGIYSICLYR). The Cytoplasmic segment spans residues 161 to 189 (FFFLQHSSGIWESIARFISGVGLVFDTLS). A helical transmembrane segment spans residues 190–208 (PLYVVVFIGIITVSFMTIA). Residues 209 to 247 (FTSRQVEMKESLVKEAEFWEEFQERQFGSGQIIQKPKTT) are Extracellular-facing. The chain crosses the membrane as a helical span at residues 248-268 (WWGLQGLNGIWSFLWLELLLF). Over 269–297 (KKYLFFHSIHTVMLSGVFYVVIFMYPEWF) the chain is Cytoplasmic. Residues 298 to 318 (YLLFFLIVSAVMLSSYYSGIV) traverse the membrane as a helical segment. Topologically, residues 319–341 (RHSQSGTLHLFPGALWKKIIILE) are extracellular. Residues 342–360 (LTNTVWLYILYCVSITFMA) traverse the membrane as a helical segment. Residues 361–363 (VGN) are Cytoplasmic-facing. The chain crosses the membrane as a helical span at residues 364 to 382 (LVYWYIYGLGIYIWFMTIR). At 383 to 404 (LFAFTHTNRNDIKLSLPQYYKS) the chain is on the extracellular side. Residues 405 to 423 (FFMALGLSGICLYVIHLLT) traverse the membrane as a helical segment. The Cytoplasmic portion of the chain corresponds to 424–426 (ADW). The helical transmembrane segment at 427–447 (YTLVVVVCIGSLSWCLFYRFR) threads the bilayer.

It localises to the cell membrane. Its function is as follows. Probably part of the ABC transporter SkfEF involved in the export of the bacteriocin SKF. Probably responsible for the translocation of bacteriocin SkfA across the membrane. This is Putative bacteriocin-SkfA transport system permease protein SkfF from Bacillus subtilis (strain 168).